We begin with the raw amino-acid sequence, 437 residues long: O-acetyl-L-homoserine sulfhydrylase (437 aa).

Lys216 carries the N6-(pyridoxal phosphate)lysine modification.

The protein belongs to the trans-sulfuration enzymes family. Homohexamer. Pyridoxal 5'-phosphate is required as a cofactor.

The catalysed reaction is O-acetyl-L-homoserine + hydrogen sulfide = L-homocysteine + acetate. The enzyme catalyses O-acetyl-L-homoserine + methanethiol = L-methionine + acetate + H(+). Its pathway is amino-acid biosynthesis; L-methionine biosynthesis via de novo pathway; L-homocysteine from O-acetyl-L-homoserine: step 1/1. Its activity is regulated as follows. Inhibited by methionine and cystathionine. Catalyzes the conversion of O-acetyl-L-homoserine (OAH) into homocysteine in the methionine biosynthesis pathway. Can also use dimethyldisulfide and methanethiol as reduced sulfur sources, leading to the direct formation of methionine. Has weak cystathionine gamma-synthase activity. In Corynebacterium glutamicum (strain ATCC 13032 / DSM 20300 / JCM 1318 / BCRC 11384 / CCUG 27702 / LMG 3730 / NBRC 12168 / NCIMB 10025 / NRRL B-2784 / 534), this protein is O-acetyl-L-homoserine sulfhydrylase.